Reading from the N-terminus, the 384-residue chain is Glucans biosynthesis protein C (384 aa).

The next 10 helical transmembrane spans lie at 17 to 37 (AWLM…THSW), 54 to 74 (FIHA…SYML), 91 to 111 (VGIP…ILLQ), 140 to 160 (LWFL…FTWF), 173 to 193 (AISL…YAAI), 212 to 232 (FIVM…LAFI), 240 to 260 (FTTP…AYLL), 274 to 294 (TESV…FSLG), 311 to 331 (ASLF…AYIT), and 338 to 358 (LIGF…LYEI).

It belongs to the acyltransferase 3 family. OpgC subfamily.

The protein resides in the cell membrane. It participates in glycan metabolism; osmoregulated periplasmic glucan (OPG) biosynthesis. Functionally, necessary for the succinyl substitution of periplasmic glucans. Could catalyze the transfer of succinyl residues from the cytoplasmic side of the membrane to the nascent glucan backbones on the periplasmic side of the membrane. The protein is Glucans biosynthesis protein C of Salmonella choleraesuis (strain SC-B67).